The primary structure comprises 358 residues: Trace amine-associated receptor 7a (358 aa).

The Extracellular segment spans residues 1–47; that stretch reads MDKLVDHFLSDQSRTMNEDLFSATSTELCYENLNRSCVRSPYSPGPR. A glycan (N-linked (GlcNAc...) asparagine) is linked at Asn-34. Cystine bridges form between Cys-37/Cys-201 and Cys-120/Cys-205. The helical transmembrane segment at 48–68 threads the bilayer; it reads LILYAVFGFGAALAVCGNLLV. At 69 to 83 the chain is on the cytoplasmic side; it reads MTSILHFRQLHSPAN. Residues 84–104 traverse the membrane as a helical segment; that stretch reads FLVASLACADFLVGLTVMPFS. At 105–121 the chain is on the extracellular side; that stretch reads TVRSVEGCWYFGESYCK. The chain crosses the membrane as a helical span at residues 122 to 143; that stretch reads FHSCFEGSFCYSSIFHLCFISV. Residues 144–166 lie on the Cytoplasmic side of the membrane; it reads DRYIAVSDPLTYPTRFTASVSGK. The chain crosses the membrane as a helical span at residues 167–187; the sequence is CITFSWLLSIIYSFSLLYTGA. Residues 188-212 are Extracellular-facing; the sequence is NEAGLEDLVSVLTCVGGCQIAVNQS. The N-linked (GlcNAc...) asparagine glycan is linked to Asn-210. Residues 213 to 233 traverse the membrane as a helical segment; it reads WVFINFLLFLIPTLVMMTVYS. At 234 to 274 the chain is on the cytoplasmic side; the sequence is KIFLIAKQQAQNIEKMSKQTARASESYKDRVAKRERKAAKT. Residues 275–295 form a helical membrane-spanning segment; sequence LGIAVAAFLLSWLPYFIDSII. Topologically, residues 296–309 are extracellular; it reads DAFLGFITPTYVYE. Residues 310-333 form a helical membrane-spanning segment; that stretch reads ILVWIAYYNSAMNPLIYAFFYPWF. Over 334–358 the chain is Cytoplasmic; it reads RKAIKLIVTGKILRENSSTTNLFPE.

The protein belongs to the G-protein coupled receptor 1 family. As to expression, specifically expressed in neurons of the olfactory epithelium.

It is found in the cell membrane. In terms of biological role, olfactory receptor specific for N,N-dimethylalkylamines trace amines. Trace amine compounds are enriched in animal body fluids and act on trace amine-associated receptors (TAARs) to elicit both intraspecific and interspecific innate behaviors. Ligand-binding causes a conformation change that triggers signaling via G(s)-class of G alpha proteins (GNAL or GNAS). This Mus musculus (Mouse) protein is Trace amine-associated receptor 7a.